The primary structure comprises 298 residues: MNLRQVEAFRAVMLTGQMTAAAELMLVTQPAISRLIKDFEQATKLQLFERRGNHIIPTQEAKTLWKEVDRAFVGLNHIGNLAADIGRQAAGTLRIAAMPALANGLLPRFLAQFIRDRPNLQVSLMGLPSSMVMEAVASGRADIGYADGPQERQGFLIETRSLPAVVAVPMGHRLAGLDRVTPQDLAGERIIKQETGTLFAMRVEVAIGGIQRRPSIEVSLSHTALSLVREGAGIAIIDPAAAIEFTDRIVLRPFSIFIDAGFLEVRSAIGAPSTIVDRFTTEFWRFHDDLMKQNGLME.

The region spanning 1–58 is the HTH lysR-type domain; the sequence is MNLRQVEAFRAVMLTGQMTAAAELMLVTQPAISRLIKDFEQATKLQLFERRGNHIIPT. The segment at residues 18-37 is a DNA-binding region (H-T-H motif); sequence MTAAAELMLVTQPAISRLIK.

It belongs to the LysR transcriptional regulatory family.

Its function is as follows. Positive regulatory protein for the occ operon involved in octopine catabolism and uptake. Also acts as a negative regulator of its expression. The chain is Octopine catabolism/uptake operon regulatory protein OccR (occR) from Agrobacterium tumefaciens (strain Ach5).